Here is a 419-residue protein sequence, read N- to C-terminus: Acetylornithine aminotransferase (419 aa).

Pyridoxal 5'-phosphate-binding positions include 116–117 and phenylalanine 149; that span reads GA. Residue arginine 152 coordinates N(2)-acetyl-L-ornithine. Pyridoxal 5'-phosphate is bound at residue 240–243; it reads DEVQ. An N6-(pyridoxal phosphate)lysine modification is found at lysine 269. Serine 296 is a N(2)-acetyl-L-ornithine binding site. Position 297 (threonine 297) interacts with pyridoxal 5'-phosphate.

It belongs to the class-III pyridoxal-phosphate-dependent aminotransferase family. ArgD subfamily. As to quaternary structure, homodimer. Requires pyridoxal 5'-phosphate as cofactor.

It localises to the cytoplasm. The catalysed reaction is N(2)-acetyl-L-ornithine + 2-oxoglutarate = N-acetyl-L-glutamate 5-semialdehyde + L-glutamate. The protein operates within amino-acid biosynthesis; L-arginine biosynthesis; N(2)-acetyl-L-ornithine from L-glutamate: step 4/4. This is Acetylornithine aminotransferase from Prochlorococcus marinus (strain SARG / CCMP1375 / SS120).